The chain runs to 769 residues: Integrin beta-8 (769 aa).

The signal sequence occupies residues 1–42 (MCGSALAFFTAAFVCLQNDRRGPASFLWAAWVFSLVLGLGQG). Over 43–684 (EDNRCASSNA…ECFSSPSYLR (642 aa)) the chain is Extracellular. Positions 46-95 (RCASSNAASCARCLALGPECGWCVQEDFISGGSRSERCDIVSNLISKGCS) constitute a PSI domain. Cystine bridges form between Cys47-Cys65, Cys55-Cys469, Cys58-Cys83, Cys68-Cys94, Cys211-Cys218, Cys266-Cys307, Cys407-Cys419, Cys439-Cys467, Cys471-Cys491, Cys471-Cys494, Cys481-Cys494, Cys499-Cys528, Cys511-Cys526, Cys520-Cys531, Cys533-Cys546, Cys553-Cys567, Cys561-Cys572, Cys574-Cys583, Cys585-Cys609, Cys593-Cys607, Cys601-Cys612, Cys614-Cys624, Cys627-Cys630, Cys634-Cys661, and Cys640-Cys657. Positions 146–384 (PVDLYYLVDV…NLVVEAYQKL (239 aa)) constitute a VWFA domain. Mg(2+) is bound by residues Asp154 and Ser156. Asp193 lines the Ca(2+) pocket. Residue Asn233 is glycosylated (N-linked (GlcNAc...) asparagine). Residues Asn249, Asp251, Pro253, and Glu254 each contribute to the Ca(2+) site. Glu254 serves as a coordination point for Mg(2+). Asn402 carries N-linked (GlcNAc...) asparagine glycosylation. Asn421, Asn431, Asn456, and Asn466 each carry an N-linked (GlcNAc...) asparagine glycan. I-EGF domains follow at residues 471–495 (CEDNRGPKGKCVDETFLDSKCFQCD), 499–547 (CHFD…KYCE), 548–584 (KDDFSCPYHHGNLCAGHGECEAGRCQCFSGWEGDRCQ), and 585–625 (CPSA…RFCE). The N-linked (GlcNAc...) asparagine glycan is linked to Asn648. The helical transmembrane segment at 685–704 (IFFIIFIVTFLIGLLKVLII) threads the bilayer. Residues 705 to 769 (RQVILQWNSN…NAHETFRCNF (65 aa)) lie on the Cytoplasmic side of the membrane.

This sequence belongs to the integrin beta chain family. In terms of assembly, heterodimer of an alpha and a beta subunit. Beta-8 (ITGB8) associates with alpha-V (ITGAV) to form ITGAV:ITGB8. ITGAV:ITGB8 interacts with TGFB1. As to expression, placenta, kidney, brain, ovary, uterus and in several transformed cells. Transiently expressed in 293 human embryonic kidney cells.

The protein localises to the cell membrane. Its function is as follows. Integrin alpha-V:beta-8 (ITGAV:ITGB8) is a receptor for fibronectin. It recognizes the sequence R-G-D in its ligands. Integrin alpha-V:beta-6 (ITGAV:ITGB6) mediates R-G-D-dependent release of transforming growth factor beta-1 (TGF-beta-1) from regulatory Latency-associated peptide (LAP), thereby playing a key role in TGF-beta-1 activation on the surface of activated regulatory T-cells (Tregs). Required during vasculogenesis. The chain is Integrin beta-8 from Homo sapiens (Human).